A 220-amino-acid polypeptide reads, in one-letter code: Small ribosomal subunit protein uS5 (220 aa).

Residues 1–39 are disordered; it reads MAEQPAGQAGTTDNRDARGDREGRRRDSGRGSRERDGEK. The span at 13–39 shows a compositional bias: basic and acidic residues; the sequence is DNRDARGDREGRRRDSGRGSRERDGEK. An S5 DRBM domain is found at 42–105; that stretch reads YLERVVAINR…EEARKSFFRV (64 aa).

Belongs to the universal ribosomal protein uS5 family. As to quaternary structure, part of the 30S ribosomal subunit. Contacts proteins S4 and S8.

In terms of biological role, with S4 and S12 plays an important role in translational accuracy. Located at the back of the 30S subunit body where it stabilizes the conformation of the head with respect to the body. In Mycobacterium bovis (strain ATCC BAA-935 / AF2122/97), this protein is Small ribosomal subunit protein uS5.